The primary structure comprises 184 residues: Photosystem I assembly protein Ycf4 (184 aa).

Helical transmembrane passes span 22–42 (LCWA…GTSS) and 57–77 (ILFF…LFIS).

This sequence belongs to the Ycf4 family.

The protein localises to the plastid. It is found in the chloroplast thylakoid membrane. In terms of biological role, seems to be required for the assembly of the photosystem I complex. This is Photosystem I assembly protein Ycf4 from Daucus carota (Wild carrot).